Reading from the N-terminus, the 143-residue chain is Large ribosomal subunit protein uL11 (143 aa).

The protein belongs to the universal ribosomal protein uL11 family. As to quaternary structure, part of the ribosomal stalk of the 50S ribosomal subunit. Interacts with L10 and the large rRNA to form the base of the stalk. L10 forms an elongated spine to which L12 dimers bind in a sequential fashion forming a multimeric L10(L12)X complex. In terms of processing, one or more lysine residues are methylated.

Forms part of the ribosomal stalk which helps the ribosome interact with GTP-bound translation factors. This is Large ribosomal subunit protein uL11 from Rhizobium johnstonii (strain DSM 114642 / LMG 32736 / 3841) (Rhizobium leguminosarum bv. viciae).